The following is a 529-amino-acid chain: Neuronal acetylcholine receptor subunit alpha-2 (529 aa).

The N-terminal stretch at 1–26 (MGPSCPVFLSFTKLSLWWLLLTPAGG) is a signal peptide. Residues 27-56 (EEAKRPPPRAPGDPLSSPSPTALPQGGSHT) are disordered. Residues 27–264 (EEAKRPPPRA…VTYAFIIRRL (238 aa)) are Extracellular-facing. N-linked (GlcNAc...) asparagine glycosylation is found at N79 and N129. A disulfide bond links C183 and C197. N235 carries an N-linked (GlcNAc...) asparagine glycan. C247 and C248 are oxidised to a cystine. The next 3 helical transmembrane spans lie at 265-289 (PLFY…VFYL), 297-315 (ITLC…LLIT), and 331-352 (YLLF…VLNV). Topologically, residues 353-502 (HHRSPSTHTM…WKYVAMVIDR (150 aa)) are cytoplasmic. A helical membrane pass occupies residues 503–521 (IFLWLFIIVCFLGTIGLFL).

It belongs to the ligand-gated ion channel (TC 1.A.9) family. Acetylcholine receptor (TC 1.A.9.1) subfamily. Alpha-2/CHRNA2 sub-subfamily. Neuronal AChR is composed of two different types of subunits: alpha and non-alpha (beta). CHRNA2/alpha-2 subunit can be combined to CHRNB2/beta-2 or CHRNB4/beta-4 to give rise to functional receptors. Both CHRNA2:CHRNB2 and CHRNA2:CHRNB4 nAChR complexes are heteropentamers with two subtypes: LS (low agonist sensitivity) with a (CHRNA2)3:(CHRNB2/4)2 and HS (high agonist sensitivity) with a (CHRNA2)2:(CHRNB2/4)3 stoichiometries; the subtypes differ in their subunit binding interfaces which are involved in ligand binding.

The protein localises to the synaptic cell membrane. Its subcellular location is the cell membrane. The enzyme catalyses Ca(2+)(in) = Ca(2+)(out). The catalysed reaction is K(+)(in) = K(+)(out). It catalyses the reaction Na(+)(in) = Na(+)(out). Functionally, component of neuronal acetylcholine receptors (nAChRs) that function as pentameric, ligand-gated cation channels with high calcium permeability among other activities. nAChRs are excitatory neurotrasnmitter receptors formed by a collection of nAChR subunits known to mediate synaptic transmission in the nervous system and the neuromuscular junction. Each nAchR subunit confers differential attributes to channel properties, including activation, deactivation and desensitization kinetics, pH sensitivity, cation permeability, and binding to allosteric modulators. CHRNA2 forms heteropentameric neuronal acetylcholine receptors with CHRNB2 and CHRNB4 and plays a role in nicotine dependence. The protein is Neuronal acetylcholine receptor subunit alpha-2 (CHRNA2) of Pan troglodytes (Chimpanzee).